We begin with the raw amino-acid sequence, 430 residues long: Pyrokinin-1 receptor (430 aa).

Residues 1-16 (MSAGNMSHDLGPPRDP) are Extracellular-facing. Asn5 carries an N-linked (GlcNAc...) asparagine glycan. A helical membrane pass occupies residues 17 to 37 (LAIVIPVTVVYSLIFITGVVG). Topologically, residues 38–53 (NISTCIVIKKNRSMHT) are cytoplasmic. Residues 54–74 (ATNYYLFSLAISDFLLLLSGV) form a helical membrane-spanning segment. The Extracellular segment spans residues 75-96 (PQEVSYIWSKYPYVFGEYICIG). The cysteines at positions 94 and 171 are disulfide-linked. A helical membrane pass occupies residues 97–117 (RGLLAETSANATVLTITAFTV). The Cytoplasmic portion of the chain corresponds to 118–140 (ERYIAICHPFLGQAMSKLSRAIR). The chain crosses the membrane as a helical span at residues 141-161 (IIVLVWIMAIVTAIPQAAQFG). Residues 162–185 (IEHYSGVEQCGIVRVIVKHSFQLS) are Extracellular-facing. The chain crosses the membrane as a helical span at residues 186 to 206 (TFIFFLAPMSIILVLYLLIGV). At 207–281 (HLYRSTLVEG…GRLNHYGTRR (75 aa)) the chain is on the cytoplasmic side. Residues 282–302 (VLRMLVAVVVCFFLCWAPFHA) form a helical membrane-spanning segment. Over 303–321 (QRLIAIYAPARGAKLRDQH) the chain is Extracellular. Residues 322–342 (EFVYTVMTYVSGVLYYLSTCI) form a helical membrane-spanning segment. Residues 343-430 (NPLLYNIMSH…QYAMIGVQVN (88 aa)) lie on the Cytoplasmic side of the membrane. Over residues 388-397 (TNSSQTQRFS) the composition is skewed to polar residues. A disordered region spans residues 388 to 413 (TNSSQTQRFSIESAEQPKPSIMQNPT).

This sequence belongs to the G-protein coupled receptor 1 family.

The protein localises to the cell membrane. Functionally, receptor for the neuropeptide CAP-3/pyrokinin-1 (TGPSASSGLWFGPRL-amide). Also activated weakly by other neuropeptides terminating in the sequence PRL-amide including pyrokinin-2, Hug-gamma, and ecdysis-triggering-hormone-1. The activity of this receptor is mediated by G proteins which activate a phosphatidyl-inositol-calcium second messenger system. This Drosophila melanogaster (Fruit fly) protein is Pyrokinin-1 receptor.